The following is an 856-amino-acid chain: DNA mismatch repair protein MutS (856 aa).

611–618 (GPNMGGKS) serves as a coordination point for ATP.

The protein belongs to the DNA mismatch repair MutS family.

Functionally, this protein is involved in the repair of mismatches in DNA. It is possible that it carries out the mismatch recognition step. This protein has a weak ATPase activity. This chain is DNA mismatch repair protein MutS, found in Histophilus somni (strain 129Pt) (Haemophilus somnus).